A 391-amino-acid polypeptide reads, in one-letter code: Testis-expressed protein 9 (391 aa).

Disordered regions lie at residues 1-31 and 65-85; these read MAGR…PGPD and QEVR…EDDY. The stretch at 188–351 forms a coiled coil; the sequence is IGTEAQIRFL…EKQKGELMIG (164 aa).

It is found in the cytoplasm. Its subcellular location is the cytoskeleton. The protein localises to the microtubule organizing center. It localises to the centrosome. The protein resides in the centriolar satellite. This chain is Testis-expressed protein 9 (TEX9), found in Homo sapiens (Human).